A 399-amino-acid chain; its full sequence is Acetate kinase (399 aa).

Asparagine 9 is a binding site for Mg(2+). Lysine 16 contributes to the ATP binding site. Arginine 90 serves as a coordination point for substrate. The Proton donor/acceptor role is filled by aspartate 147. ATP is bound by residues 207 to 211 (HLGNG), 281 to 283 (DFR), and 333 to 337 (GVGEN). Glutamate 387 lines the Mg(2+) pocket.

It belongs to the acetokinase family. As to quaternary structure, homodimer. The cofactor is Mg(2+). Requires Mn(2+) as cofactor.

Its subcellular location is the cytoplasm. The enzyme catalyses acetate + ATP = acetyl phosphate + ADP. It functions in the pathway metabolic intermediate biosynthesis; acetyl-CoA biosynthesis; acetyl-CoA from acetate: step 1/2. Functionally, catalyzes the formation of acetyl phosphate from acetate and ATP. Can also catalyze the reverse reaction. The protein is Acetate kinase of Mycobacterium sp. (strain KMS).